We begin with the raw amino-acid sequence, 208 residues long: FMN-dependent NADH:quinone oxidoreductase (208 aa).

Residues S9, 15 to 17 (SVS), 96 to 99 (MYNF), and 140 to 143 (TRGG) each bind FMN.

Belongs to the azoreductase type 1 family. In terms of assembly, homodimer. FMN is required as a cofactor.

The catalysed reaction is 2 a quinone + NADH + H(+) = 2 a 1,4-benzosemiquinone + NAD(+). It catalyses the reaction N,N-dimethyl-1,4-phenylenediamine + anthranilate + 2 NAD(+) = 2-(4-dimethylaminophenyl)diazenylbenzoate + 2 NADH + 2 H(+). Functionally, quinone reductase that provides resistance to thiol-specific stress caused by electrophilic quinones. Also exhibits azoreductase activity. Catalyzes the reductive cleavage of the azo bond in aromatic azo compounds to the corresponding amines. This is FMN-dependent NADH:quinone oxidoreductase from Azospirillum brasilense.